Consider the following 469-residue polypeptide: E3 ubiquitin-protein ligase TRIM21 (469 aa).

The RING-type zinc finger occupies C16–R55. The B box-type zinc finger occupies P87–I128. Positions 92, 95, 114, and 120 each coordinate Zn(2+). Positions I128–Q245 form a coiled coil. At S266 the chain carries Phosphoserine. Residues D268 to T467 form the B30.2/SPRY domain.

It belongs to the TRIM/RBCC family. As to quaternary structure, homotrimer. Interacts (via C-terminus) with IRF8 (via C-terminus). Component of a SCF(SKP2)-like complex containing CUL1, SKP1, TRIM21 and SKP2. Interacts with CALR, CUL1, FBXW11, HSPA5, IKBKB, IRF3, SKP1 and VCP. Interacts with SKP2; the interaction with SKP2 does not depend on an intact F-box domain. Interacts (via N-terminus and C-terminus) with DCP2 (via N-terminus and C-terminus). Interacts with ULK1, BECN1 and with ATG8 family members, including GABARAP, GABARAPL1, GABARAPL2 and MAP1LC3C/LC3C. Interacts with TRIM21 and SQSTM1/sequestosome 1. Interacts with IRF3. Interacts (via the SPRY domain) with NMI (via coiled-coil domain); the interaction promotes 'Lys-63'-linked ubiquitination of NMI. Interacts with IFI35 and NMI; the interaction facilitates NMI-IFI35 complex formation. Autoubiquitinated; does not lead to its proteasomal degradation. Deubiquitinated by USP4; leading to its stabilization.

The protein resides in the cytoplasm. It is found in the cytoplasmic vesicle. Its subcellular location is the autophagosome. The protein localises to the nucleus. It localises to the P-body. The protein resides in the stress granule. The catalysed reaction is S-ubiquitinyl-[E2 ubiquitin-conjugating enzyme]-L-cysteine + [acceptor protein]-L-lysine = [E2 ubiquitin-conjugating enzyme]-L-cysteine + N(6)-ubiquitinyl-[acceptor protein]-L-lysine.. The protein operates within protein modification; protein ubiquitination. Its function is as follows. E3 ubiquitin-protein ligase whose activity is dependent on E2 enzymes, UBE2D1, UBE2D2, UBE2E1 and UBE2E2. Forms a ubiquitin ligase complex in cooperation with the E2 UBE2D2 that is used not only for the ubiquitination of USP4 and IKBKB but also for its self-ubiquitination. Component of cullin-RING-based SCF (SKP1-CUL1-F-box protein) E3 ubiquitin-protein ligase complexes such as SCF(SKP2)-like complexes. A TRIM21-containing SCF(SKP2)-like complex is shown to mediate ubiquitination of CDKN1B ('Thr-187' phosphorylated-form), thereby promoting its degradation by the proteasome. Monoubiquitinates IKBKB that will negatively regulates Tax-induced NF-kappa-B signaling. Negatively regulates IFN-beta production post-pathogen recognition by catalyzing polyubiquitin-mediated degradation of IRF3. Mediates the ubiquitin-mediated proteasomal degradation of IgG1 heavy chain, which is linked to the VCP-mediated ER-associated degradation (ERAD) pathway. Promotes IRF8 ubiquitination, which enhanced the ability of IRF8 to stimulate cytokine genes transcription in macrophages. Plays a role in the regulation of the cell cycle progression. Enhances the decapping activity of DCP2. Exists as a ribonucleoprotein particle present in all mammalian cells studied and composed of a single polypeptide and one of four small RNA molecules. At least two isoforms are present in nucleated and red blood cells, and tissue specific differences in RO/SSA proteins have been identified. The common feature of these proteins is their ability to bind HY RNAs.2. Involved in the regulation of innate immunity and the inflammatory response in response to IFNG/IFN-gamma. Organizes autophagic machinery by serving as a platform for the assembly of ULK1, Beclin 1/BECN1 and ATG8 family members and recognizes specific autophagy targets, thus coordinating target recognition with assembly of the autophagic apparatus and initiation of autophagy. Also regulates autophagy through FIP200/RB1CC1 ubiquitination and subsequent decreased protein stability. Represses the innate antiviral response by facilitating the formation of the NMI-IFI35 complex through 'Lys-63'-linked ubiquitination of NMI. During viral infection, promotes cell pyroptosis by mediating 'Lys-6'-linked ubiquitination of ISG12a/IFI27, facilitating its translocation into the mitochondria and subsequent CASP3 activation. When up-regulated through the IFN/JAK/STAT signaling pathway, promotes 'Lys-27'-linked ubiquitination of MAVS, leading to the recruitment of TBK1 and up-regulation of innate immunity. Mediates 'Lys-63'-linked polyubiquitination of G3BP1 in response to heat shock, leading to stress granule disassembly. The polypeptide is E3 ubiquitin-protein ligase TRIM21 (TRIM21) (Bos taurus (Bovine)).